A 290-amino-acid polypeptide reads, in one-letter code: uncharacterized protein (290 aa).

5 helical membrane passes run 14–34 (ALLNIFAYVILAVVKLVIGIL), 82–102 (ISSLVASFIMMAVGIEVLIGG), 115–135 (NLIAAWTALGSAVFMYGIYLY), 158–174 (DAFVSAGAFIGVFSSQL), and 176–196 (LPWVDPVTAFIIGIIICKTAW).

It belongs to the cation diffusion facilitator (CDF) transporter (TC 2.A.4) family.

Its subcellular location is the cell membrane. This is an uncharacterized protein from Bacillus subtilis (strain 168).